Reading from the N-terminus, the 429-residue chain is ATP-dependent RNA helicase RhlB (429 aa).

A Q motif motif is present at residues 9–37 (EKFAQMGLEPEVLAGLESKGFHYCTPIQA). Positions 40-219 (LPLLVEGHDL…YEHMNHPEHV (180 aa)) constitute a Helicase ATP-binding domain. ATP is bound at residue 53–60 (AQTGTGKT). Residues 165-168 (DEAD) carry the DEAD box motif. The Helicase C-terminal domain occupies 243 to 390 (KMLLLLSLME…VSKYDREALL (148 aa)). Positions 395–429 (APKRVVRNRQPVNRNMRDRQGGGNSNNRRRPPRKS) are disordered.

It belongs to the DEAD box helicase family. RhlB subfamily. Component of the RNA degradosome, which is a multiprotein complex involved in RNA processing and mRNA degradation.

It is found in the cytoplasm. The enzyme catalyses ATP + H2O = ADP + phosphate + H(+). Its function is as follows. DEAD-box RNA helicase involved in RNA degradation. Has RNA-dependent ATPase activity and unwinds double-stranded RNA. This chain is ATP-dependent RNA helicase RhlB, found in Aeromonas salmonicida (strain A449).